A 100-amino-acid polypeptide reads, in one-letter code: Urease subunit gamma (100 aa).

The protein belongs to the urease gamma subunit family. As to quaternary structure, heterotrimer of UreA (gamma), UreB (beta) and UreC (alpha) subunits. Three heterotrimers associate to form the active enzyme.

Its subcellular location is the cytoplasm. The catalysed reaction is urea + 2 H2O + H(+) = hydrogencarbonate + 2 NH4(+). It participates in nitrogen metabolism; urea degradation; CO(2) and NH(3) from urea (urease route): step 1/1. This is Urease subunit gamma from Burkholderia mallei (strain NCTC 10247).